The chain runs to 511 residues: Lysine--tRNA ligase (511 aa).

Glutamate 421 and glutamate 428 together coordinate Mg(2+).

It belongs to the class-II aminoacyl-tRNA synthetase family. Homodimer. Requires Mg(2+) as cofactor.

Its subcellular location is the cytoplasm. It carries out the reaction tRNA(Lys) + L-lysine + ATP = L-lysyl-tRNA(Lys) + AMP + diphosphate. The chain is Lysine--tRNA ligase from Aeromonas hydrophila subsp. hydrophila (strain ATCC 7966 / DSM 30187 / BCRC 13018 / CCUG 14551 / JCM 1027 / KCTC 2358 / NCIMB 9240 / NCTC 8049).